The sequence spans 145 residues: uncharacterized protein (145 aa).

A dksA C4-type zinc finger spans residues 86 to 110; sequence CERCGEEIPEPRLCAIPWTRYCAKC.

This is an uncharacterized protein from Aquifex aeolicus (strain VF5).